We begin with the raw amino-acid sequence, 155 residues long: Ribosomal RNA large subunit methyltransferase H (155 aa).

S-adenosyl-L-methionine contacts are provided by residues L72, G104, and 123–128 (LAKITL).

It belongs to the RNA methyltransferase RlmH family. Homodimer.

It localises to the cytoplasm. It carries out the reaction pseudouridine(1915) in 23S rRNA + S-adenosyl-L-methionine = N(3)-methylpseudouridine(1915) in 23S rRNA + S-adenosyl-L-homocysteine + H(+). Specifically methylates the pseudouridine at position 1915 (m3Psi1915) in 23S rRNA. This Mycoplasma capricolum subsp. capricolum (strain California kid / ATCC 27343 / NCTC 10154) protein is Ribosomal RNA large subunit methyltransferase H.